The primary structure comprises 303 residues: Biphenyl-2,3-diol 1,2-dioxygenase (303 aa).

VOC domains are found at residues 5-119 (SLGY…IYYG) and 143-264 (GLGH…YGWS). Fe cation is bound by residues His-146, His-210, and Glu-260. Residues 283–303 (WGHKSVRDKALRATKHEQQPE) form a disordered region. Residues 287–303 (SVRDKALRATKHEQQPE) are compositionally biased toward basic and acidic residues.

The protein belongs to the extradiol ring-cleavage dioxygenase family. In terms of assembly, homooctamer. Fe(2+) is required as a cofactor.

It carries out the reaction biphenyl-2,3-diol + O2 = 2-hydroxy-6-oxo-6-phenylhexa-2,4-dienoate + H(+). Its pathway is xenobiotic degradation; biphenyl degradation; 2-hydroxy-2,4-pentadienoate and benzoate from biphenyl: step 3/4. In Metapseudomonas furukawaii (Pseudomonas furukawaii), this protein is Biphenyl-2,3-diol 1,2-dioxygenase (bphC).